The primary structure comprises 424 residues: Serine--tRNA ligase (424 aa).

Threonine 230–glutamate 232 provides a ligand contact to L-serine. Residue arginine 261–glutamate 263 coordinates ATP. Glutamate 284 contributes to the L-serine binding site. Glutamate 348–serine 351 lines the ATP pocket. Serine 384 provides a ligand contact to L-serine.

Belongs to the class-II aminoacyl-tRNA synthetase family. Type-1 seryl-tRNA synthetase subfamily. In terms of assembly, homodimer. The tRNA molecule binds across the dimer.

It is found in the cytoplasm. It carries out the reaction tRNA(Ser) + L-serine + ATP = L-seryl-tRNA(Ser) + AMP + diphosphate + H(+). The enzyme catalyses tRNA(Sec) + L-serine + ATP = L-seryl-tRNA(Sec) + AMP + diphosphate + H(+). Its pathway is aminoacyl-tRNA biosynthesis; selenocysteinyl-tRNA(Sec) biosynthesis; L-seryl-tRNA(Sec) from L-serine and tRNA(Sec): step 1/1. Functionally, catalyzes the attachment of serine to tRNA(Ser). Is also able to aminoacylate tRNA(Sec) with serine, to form the misacylated tRNA L-seryl-tRNA(Sec), which will be further converted into selenocysteinyl-tRNA(Sec). The polypeptide is Serine--tRNA ligase (Nitratidesulfovibrio vulgaris (strain ATCC 29579 / DSM 644 / CCUG 34227 / NCIMB 8303 / VKM B-1760 / Hildenborough) (Desulfovibrio vulgaris)).